The following is a 314-amino-acid chain: 1D-myo-inositol 2-acetamido-2-deoxy-alpha-D-glucopyranoside deacetylase 2 (314 aa).

Positions 25, 28, and 161 each coordinate Zn(2+).

The protein belongs to the MshB deacetylase family. It depends on Zn(2+) as a cofactor.

The catalysed reaction is 1D-myo-inositol 2-acetamido-2-deoxy-alpha-D-glucopyranoside + H2O = 1D-myo-inositol 2-amino-2-deoxy-alpha-D-glucopyranoside + acetate. Its function is as follows. Catalyzes the deacetylation of 1D-myo-inositol 2-acetamido-2-deoxy-alpha-D-glucopyranoside (GlcNAc-Ins) in the mycothiol biosynthesis pathway. The chain is 1D-myo-inositol 2-acetamido-2-deoxy-alpha-D-glucopyranoside deacetylase 2 from Frankia casuarinae (strain DSM 45818 / CECT 9043 / HFP020203 / CcI3).